Reading from the N-terminus, the 1302-residue chain is Serine-enriched protein (1302 aa).

One can recognise a BTB domain in the interval 40 to 158; the sequence is CDVTFLVGDT…IHTGCVTLQP (119 aa). Disordered regions lie at residues 325 to 532, 575 to 624, 648 to 685, 701 to 752, 834 to 858, 1045 to 1090, 1102 to 1163, and 1187 to 1252; these read SIDP…RSPT, PIPP…SVMR, FTRAESGSSGGPLIRQSTFSASPAASSTAAKSAVQKQM, YAKM…SSDE, FTRRSESREPIEPRISEERESDSND, FQRS…RTEN, FSRA…GEEE, and VLTQ…SASP. Basic residues predominate over residues 337 to 364; sequence RQHHRHRHHHQSLPKIRKAKSQSFRTRR. Polar residues-rich tracts occupy residues 378–388, 410–430, 437–449, and 472–487; these read LTLNTSLTSGN, SPGSSSQKTPTSLSRQGTLRA, SGQLSISLGTQGR, and GLRSPNDPMTSPTVRS. The span at 589-623 shows a compositional bias: basic and acidic residues; that stretch reads KSAEREREAAEAAAREKEKEKEKEAAQPQEKKSVM. Residues 664–680 are compositionally biased toward low complexity; the sequence is STFSASPAASSTAAKSA. Residues 713–723 are compositionally biased toward basic and acidic residues; sequence KRDDEEKEKQK. A compositionally biased stretch (polar residues) spans 736–748; sequence DLSQTNADQQVGG. A compositionally biased stretch (basic and acidic residues) spans 836 to 855; sequence RRSESREPIEPRISEERESD. Low complexity-rich tracts occupy residues 1047-1056 and 1107-1128; these read RSGSSCGGRK and SPLSQQTSSNYSSRDSYDSSGS. Residues 1187–1207 are compositionally biased toward polar residues; sequence VLTQQLSTGSMSTPSGYTNGT. The segment covering 1226 to 1252 has biased composition (low complexity); it reads APLSSCGFSSGSEFEPPSPRRAASASP.

In Drosophila melanogaster (Fruit fly), this protein is Serine-enriched protein (gprs).